Consider the following 184-residue polypeptide: Peptide deformylase (184 aa).

Residues Cys111 and His154 each contribute to the Fe cation site. Glu155 is an active-site residue. His158 provides a ligand contact to Fe cation.

Belongs to the polypeptide deformylase family. The cofactor is Fe(2+).

The catalysed reaction is N-terminal N-formyl-L-methionyl-[peptide] + H2O = N-terminal L-methionyl-[peptide] + formate. In terms of biological role, removes the formyl group from the N-terminal Met of newly synthesized proteins. Requires at least a dipeptide for an efficient rate of reaction. N-terminal L-methionine is a prerequisite for activity but the enzyme has broad specificity at other positions. The protein is Peptide deformylase of Lacticaseibacillus casei (strain BL23) (Lactobacillus casei).